Here is a 557-residue protein sequence, read N- to C-terminus: Dihydroxy-acid dehydratase (557 aa).

Position 78 (aspartate 78) interacts with Mg(2+). A [2Fe-2S] cluster-binding site is contributed by cysteine 119. 2 residues coordinate Mg(2+): aspartate 120 and lysine 121. Lysine 121 is modified (N6-carboxylysine). Residue cysteine 192 coordinates [2Fe-2S] cluster. Glutamate 442 lines the Mg(2+) pocket. Serine 468 serves as the catalytic Proton acceptor.

This sequence belongs to the IlvD/Edd family. In terms of assembly, homodimer. It depends on [2Fe-2S] cluster as a cofactor. Mg(2+) is required as a cofactor.

It carries out the reaction (2R)-2,3-dihydroxy-3-methylbutanoate = 3-methyl-2-oxobutanoate + H2O. The enzyme catalyses (2R,3R)-2,3-dihydroxy-3-methylpentanoate = (S)-3-methyl-2-oxopentanoate + H2O. Its pathway is amino-acid biosynthesis; L-isoleucine biosynthesis; L-isoleucine from 2-oxobutanoate: step 3/4. The protein operates within amino-acid biosynthesis; L-valine biosynthesis; L-valine from pyruvate: step 3/4. In terms of biological role, functions in the biosynthesis of branched-chain amino acids. Catalyzes the dehydration of (2R,3R)-2,3-dihydroxy-3-methylpentanoate (2,3-dihydroxy-3-methylvalerate) into 2-oxo-3-methylpentanoate (2-oxo-3-methylvalerate) and of (2R)-2,3-dihydroxy-3-methylbutanoate (2,3-dihydroxyisovalerate) into 2-oxo-3-methylbutanoate (2-oxoisovalerate), the penultimate precursor to L-isoleucine and L-valine, respectively. This Bacillus mycoides (strain KBAB4) (Bacillus weihenstephanensis) protein is Dihydroxy-acid dehydratase.